Here is a 323-residue protein sequence, read N- to C-terminus: Viral cathepsin (323 aa).

The first 16 residues, 1 to 16 (MNKILFYLFVYAVVKS), serve as a signal peptide directing secretion. Residues 17 to 112 (AAYDPLKAPN…ILLDQPPGKG (96 aa)) constitute a propeptide, activation peptide. 3 disulfide bridges follow: Cys-133-Cys-174, Cys-167-Cys-207, and Cys-262-Cys-310. The active site involves Cys-136. Asn-158 carries N-linked (GlcNAc...) asparagine; by host glycosylation. Active-site residues include His-269 and Asn-289.

The protein belongs to the peptidase C1 family. Post-translationally, synthesized as an inactive proenzyme and activated by proteolytic removal of the inhibitory propeptide.

It catalyses the reaction Endopeptidase of broad specificity, hydrolyzing substrates of both cathepsin L and cathepsin B.. Its function is as follows. Cysteine protease that plays an essential role in host liquefaction to facilitate horizontal transmission of the virus. May participate in the degradation of foreign protein expressed by the baculovirus system. The chain is Viral cathepsin (VCATH) from Bombyx mori (Silk moth).